The chain runs to 514 residues: Multifunctional alkaline phosphatase superfamily protein pRL90232 (514 aa).

Mn(2+) is bound by residues Asp12, Cys57, Asp324, and His325. Cys57 functions as the Nucleophile in the catalytic mechanism. Residue Cys57 is modified to 3-oxoalanine (Cys).

This sequence belongs to the alkaline phosphatase superfamily. Homotetramer. It depends on Mn(2+) as a cofactor. Post-translationally, the conversion to 3-oxoalanine (also known as C-formylglycine, FGly), of a serine or cysteine residue in prokaryotes and of a cysteine residue in eukaryotes, is critical for catalytic activity.

Functionally, hydrolytic enzyme with a broad substrate specificity acting on phosphate diesters and phosphonate monoesters. The chain is Multifunctional alkaline phosphatase superfamily protein pRL90232 from Rhizobium johnstonii (strain DSM 114642 / LMG 32736 / 3841) (Rhizobium leguminosarum bv. viciae).